Consider the following 266-residue polypeptide: GTP cyclohydrolase MptA (266 aa).

Belongs to the GTP cyclohydrolase IV family. Homodimer. Fe(2+) serves as cofactor.

It carries out the reaction GTP + H2O = 7,8-dihydroneopterin 2',3'-cyclic phosphate + formate + diphosphate + H(+). It participates in cofactor biosynthesis; 5,6,7,8-tetrahydromethanopterin biosynthesis. Functionally, converts GTP to 7,8-dihydro-D-neopterin 2',3'-cyclic phosphate, the first intermediate in the biosynthesis of coenzyme methanopterin. The sequence is that of GTP cyclohydrolase MptA from Pyrococcus abyssi (strain GE5 / Orsay).